The chain runs to 355 residues: MPTISVNLTTQKYQIKIENGLATSIGREVQRVWSVRKIALVTDTIVGPLYQAQITEQLTQAGFQVTVLTIPAGESAKSLEQAMSLYEALLTANFNRSDGLIALGGGVVGDLTGFVASTYMRGLPFIQIPTSLLAQVDSSVGGKTAVDLPAGKNLVGTFYQPELVLIDPQMLETLPQRQLVTGYAEVVKIAALVGADFWNLVQQIESPTAILDKAPELIARSIAYKAQIVMADVQESGQRRLLNFGHTIGHAVESLADGELTHGEAVSIGLIAISRLFEQPTQIAAQLQTVLERVGLPVTHPLLQSPALFEKIAHDKKNQGALINIVYLKAIGQPTILQLPLTQFSAQLKMKQRSF.

NAD(+) is bound by residues 106–110 (GVVGD), 130–131 (TS), K143, and K152. Residues E185, H246, and H262 each contribute to the Zn(2+) site.

The protein belongs to the sugar phosphate cyclases superfamily. Dehydroquinate synthase family. It depends on Co(2+) as a cofactor. Requires Zn(2+) as cofactor. The cofactor is NAD(+).

The protein localises to the cytoplasm. It catalyses the reaction 7-phospho-2-dehydro-3-deoxy-D-arabino-heptonate = 3-dehydroquinate + phosphate. It functions in the pathway metabolic intermediate biosynthesis; chorismate biosynthesis; chorismate from D-erythrose 4-phosphate and phosphoenolpyruvate: step 2/7. Its function is as follows. Catalyzes the conversion of 3-deoxy-D-arabino-heptulosonate 7-phosphate (DAHP) to dehydroquinate (DHQ). The chain is 3-dehydroquinate synthase from Latilactobacillus sakei subsp. sakei (strain 23K) (Lactobacillus sakei subsp. sakei).